A 425-amino-acid polypeptide reads, in one-letter code: D-amino acid dehydrogenase 2 (425 aa).

3-17 (ITVVGAGIVGISTAY) lines the FAD pocket.

Belongs to the DadA oxidoreductase family. Requires FAD as cofactor.

The enzyme catalyses a D-alpha-amino acid + A + H2O = a 2-oxocarboxylate + AH2 + NH4(+). Oxidative deamination of D-amino acids. The polypeptide is D-amino acid dehydrogenase 2 (dadA2) (Ralstonia nicotianae (strain ATCC BAA-1114 / GMI1000) (Ralstonia solanacearum)).